The primary structure comprises 963 residues: Probable sucrose-phosphate synthase 2 (963 aa).

Residues Lys-111–Lys-150 are disordered.

It belongs to the glycosyltransferase 1 family. Homodimer or homotetramer. In terms of tissue distribution, expressed in germinating seeds.

The catalysed reaction is beta-D-fructose 6-phosphate + UDP-alpha-D-glucose = sucrose 6(F)-phosphate + UDP + H(+). The protein operates within glycan biosynthesis; sucrose biosynthesis; sucrose from D-fructose 6-phosphate and UDP-alpha-D-glucose: step 1/2. Activity is regulated by phosphorylation and moderated by concentration of metabolites and light. Plays a role in photosynthetic sucrose synthesis by catalyzing the rate-limiting step of sucrose biosynthesis from UDP-glucose and fructose- 6-phosphate. Involved in the regulation of carbon partitioning in the leaves of plants. May regulate the synthesis of sucrose and therefore play a major role as a limiting factor in the export of photoassimilates out of the leaf. Plays a role for sucrose availability that is essential for plant growth and fiber elongation. The sequence is that of Probable sucrose-phosphate synthase 2 (SPS2) from Oryza sativa subsp. japonica (Rice).